Reading from the N-terminus, the 461-residue chain is Photosynthetic NDH subunit of subcomplex B 1, chloroplastic (461 aa).

Residues 1–44 constitute a chloroplast transit peptide; it reads MASSLPLLPKPISPFFKTPPFSTSKPLVFLNFQTRLTSRSSDVS. The tract at residues 66-90 is disordered; the sequence is NEYGSLFADGKQDEDPRPPDNPDNP. A compositionally biased stretch (basic and acidic residues) spans 75–85; that stretch reads GKQDEDPRPPD.

In terms of assembly, part of the chloroplast NDH complex, composed of a mixture of chloroplast and nucleus encoded subunits. Component of the NDH subcomplex B, at least composed of PnsB1, PnsB2, PnsB3, PnsB4 and PnsB5.

It is found in the plastid. It localises to the chloroplast thylakoid membrane. Functionally, NDH shuttles electrons from NAD(P)H:plastoquinone, via FMN and iron-sulfur (Fe-S) centers, to quinones in the photosynthetic chain and possibly in a chloroplast respiratory chain. The immediate electron acceptor for the enzyme in this species is believed to be plastoquinone. Couples the redox reaction to proton translocation, and thus conserves the redox energy in a proton gradient. In Arabidopsis thaliana (Mouse-ear cress), this protein is Photosynthetic NDH subunit of subcomplex B 1, chloroplastic.